Reading from the N-terminus, the 303-residue chain is Cyclin-dependent kinase B1-1 (303 aa).

Residues 4 to 295 (YEKLEKVGEG…AKAAMEHPYF (292 aa)) enclose the Protein kinase domain. Residues 10-18 (VGEGTYGKV) and lysine 33 each bind ATP. At threonine 14 the chain carries Phosphothreonine. The residue at position 15 (tyrosine 15) is a Phosphotyrosine. The active-site Proton acceptor is the aspartate 136. Threonine 170 is modified (phosphothreonine).

It belongs to the protein kinase superfamily. CMGC Ser/Thr protein kinase family. CDC2/CDKX subfamily. Expressed in actively dividing cells: root and shoot apical meristems, and young leaves.

It catalyses the reaction L-seryl-[protein] + ATP = O-phospho-L-seryl-[protein] + ADP + H(+). It carries out the reaction L-threonyl-[protein] + ATP = O-phospho-L-threonyl-[protein] + ADP + H(+). The catalysed reaction is [DNA-directed RNA polymerase] + ATP = phospho-[DNA-directed RNA polymerase] + ADP + H(+). The chain is Cyclin-dependent kinase B1-1 (CDKB1-1) from Oryza sativa subsp. japonica (Rice).